The sequence spans 189 residues: Threonylcarbamoyl-AMP synthase (189 aa).

The YrdC-like domain occupies 9–189 (ASAQRKLSVY…IDGETGKRLR (181 aa)).

It belongs to the SUA5 family. TsaC subfamily.

It is found in the cytoplasm. The catalysed reaction is L-threonine + hydrogencarbonate + ATP = L-threonylcarbamoyladenylate + diphosphate + H2O. Required for the formation of a threonylcarbamoyl group on adenosine at position 37 (t(6)A37) in tRNAs that read codons beginning with adenine. Catalyzes the conversion of L-threonine, HCO(3)(-)/CO(2) and ATP to give threonylcarbamoyl-AMP (TC-AMP) as the acyladenylate intermediate, with the release of diphosphate. The sequence is that of Threonylcarbamoyl-AMP synthase from Neisseria meningitidis serogroup C (strain 053442).